We begin with the raw amino-acid sequence, 247 residues long: MIKLVLLRHGESQWNRENRFTGWRDIDLSEKGLAEAANAGVLMKEEGLTFDIAYTSVLKRAIRTLWNALDTMDLLWVPVEKTWRLNERHYGSLQGLNKTETAQLHGEEQVLVWRRSYDTPPPPLEKTDERYPGNDPRYASLSSEEIPVAECLKDTVARFLPYWHETIAPQIKAGKKVLIVAHGNSLRALVKYLDNISEEDIVGINIPTGIPLVYELDDDLKPIRHYYLGDQEAAAKAAAAVANQAKG.

Residues 8–15 (RHGESQWN), 21–22 (TG), arginine 60, 87–90 (ERHY), lysine 98, 114–115 (RR), and 183–184 (GN) each bind substrate. Histidine 9 acts as the Tele-phosphohistidine intermediate in catalysis. Glutamate 87 (proton donor/acceptor) is an active-site residue.

The protein belongs to the phosphoglycerate mutase family. BPG-dependent PGAM subfamily.

The enzyme catalyses (2R)-2-phosphoglycerate = (2R)-3-phosphoglycerate. Its pathway is carbohydrate degradation; glycolysis; pyruvate from D-glyceraldehyde 3-phosphate: step 3/5. In terms of biological role, catalyzes the interconversion of 2-phosphoglycerate and 3-phosphoglycerate. The sequence is that of 2,3-bisphosphoglycerate-dependent phosphoglycerate mutase from Prosthecochloris aestuarii (strain DSM 271 / SK 413).